The primary structure comprises 223 residues: Ras-related protein Rab-37 (223 aa).

Residues M1–G13 are compositionally biased toward low complexity. Residues M1–F22 form a disordered region. T2 is subject to N-acetylthreonine. The GTP site is built by S38, G39, V40, G41, K42, T43, C44, and T62. T43 is a Mg(2+) binding site. 2 short sequence motifs (switch) span residues G52–S67 and D85–D102. Residues T62 and D85 each contribute to the Mg(2+) site. GTP contacts are provided by G88, N143, K144, D146, S173, A174, and K175. 2 S-geranylgeranyl cysteine lipidation sites follow: C219 and C220. C220 carries the post-translational modification Cysteine methyl ester. A propeptide spans S221–V223 (removed in mature form).

It belongs to the small GTPase superfamily. Rab family. In terms of assembly, interacts with RIMS1. Interacts (in GDP-bound form) with RPGR, RPGR functions as guanine exchange factor (GEF). Mg(2+) serves as cofactor. In terms of tissue distribution, expressed in the retina (at protein level). Specifically expressed in the bone marrow mast cells.

Its subcellular location is the cytoplasmic vesicle. It localises to the cell projection. It is found in the cilium. The enzyme catalyses GTP + H2O = GDP + phosphate + H(+). Regulated by guanine nucleotide exchange factors (GEFs) including RPGR which promote the exchange of bound GDP for free GTP. Regulated by GTPase activating proteins (GAPs) which increase the GTP hydrolysis activity. Inhibited by GDP dissociation inhibitors (GDIs). The small GTPases Rab are key regulators of intracellular membrane trafficking, from the formation of transport vesicles to their fusion with membranes. Rabs cycle between an inactive GDP-bound form and an active GTP-bound form that is able to recruit to membranes different sets of downstream effectors directly responsible for vesicle formation, movement, tethering and fusion. Acts as an organizer for autophagosome biogenesis in a GTP-dependent manner. Involved in retinal homeostasis by autophagy regulation. The polypeptide is Ras-related protein Rab-37 (Mus musculus (Mouse)).